The chain runs to 464 residues: RCC1-like G exchanging factor-like protein (464 aa).

The transit peptide at 1-37 (MALVALVAGARLGRRLSGPGLGRGHWTAAGRSRSRRE) directs the protein to the mitochondrion. RCC1 repeat units follow at residues 58–124 (ADRV…LSSK), 128–191 (VTKV…VLTD), 193–247 (EGVF…FLTD), 248–300 (KGEV…AVSA), 302–353 (GGLF…VLNG), 354–411 (EGHV…ALTN), and 412–461 (KGEL…TLAK).

Forms a regulatory protein-RNA complex, consisting of RCC1L, NGRN, RPUSD3, RPUSD4, TRUB2, FASTKD2 and 16S mt-rRNA. Interacts with 16S mt-rRNA; this interaction is direct. Interacts with OPA1; this interaction is direct. As to quaternary structure, asociates with the mitochondrial ribosome large subunit (mt-LSU). In terms of assembly, asociates with the mitochondrial ribosome small subunit (mt-SSU). Ubiquitous.

The protein localises to the mitochondrion membrane. The protein resides in the mitochondrion inner membrane. Its function is as follows. Guanine nucleotide exchange factor (GEF) for mitochondrial dynamin-related GTPase OPA1. Activates OPA1, by exchanging bound GDP for free GTP, and drives OPA1 and MFN1-dependent mitochondrial fusion. Plays an essential role in mitochondrial ribosome biogenesis. As a component of a functional protein-RNA module, consisting of RCC1L, NGRN, RPUSD3, RPUSD4, TRUB2, FASTKD2 and 16S mitochondrial ribosomal RNA (16S mt-rRNA), controls 16S mt-rRNA abundance and is required for intra-mitochondrial translation of core subunits of the oxidative phosphorylation system. Plays an essential role in mitochondrial ribosome biogenesis via its association with GTPases that play a role in the assembly of the large ribosome subunit. In terms of biological role, plays an essential role in mitochondrial ribosome biogenesis via its association with GTPases that play a role in the assembly of the small ribosome subunit. In Homo sapiens (Human), this protein is RCC1-like G exchanging factor-like protein.